We begin with the raw amino-acid sequence, 277 residues long: Myelin proteolipid protein (277 aa).

Residues 1 to 10 are Cytoplasmic-facing; sequence MGLLECCARC. Residues C6, C7, and C10 are each lipidated (S-palmitoyl cysteine). A helical membrane pass occupies residues 11–36; that stretch reads LVGAPFASLVATGLCFFGVALFCGCG. Residues 37–59 lie on the Extracellular side of the membrane; the sequence is HEALTGTEKLIETYFSKNYQDYE. A helical transmembrane segment spans residues 60 to 88; sequence YLINVIHAFQYVIYGTASFFFLYGALLLA. Topologically, residues 89-151 are cytoplasmic; the sequence is EGFYTTGAVR…LGKWLGHPDK (63 aa). A lipid anchor (S-palmitoyl cysteine) is attached at C109. S114 is modified (phosphoserine). Residues T116 and T118 each carry the phosphothreonine modification. S-palmitoyl cysteine attachment occurs at residues C139 and C141. The helical transmembrane segment at 152–178 threads the bilayer; it reads FVGITYALTVVWLLVFACSAVPVYIYF. The Extracellular portion of the chain corresponds to 179-238; the sequence is NTWTTCQSIAFPSKTSASIGTLCADARMYGVLPWNAFPGKVCGSNLLSICKTAEFQMTFH. 2 disulfide bridges follow: C184–C228 and C201–C220. T199 carries the O-palmitoyl threonine lipid modification. Residues 239-268 form a helical membrane-spanning segment; sequence LFIAAFVGAAATLVSLLTFMIAATYNFAVL. At 269 to 277 the chain is on the cytoplasmic side; sequence KLMGRGTKF.

Belongs to the myelin proteolipid protein family. In terms of assembly, interacts with MAL.

Its subcellular location is the cell membrane. It is found in the myelin membrane. This is the major myelin protein from the central nervous system. It plays an important role in the formation or maintenance of the multilamellar structure of myelin. The sequence is that of Myelin proteolipid protein (PLP1) from Oryctolagus cuniculus (Rabbit).